A 288-amino-acid polypeptide reads, in one-letter code: 4-hydroxy-3-methylbut-2-enyl diphosphate reductase (288 aa).

Cysteine 12 serves as a coordination point for [4Fe-4S] cluster. The (2E)-4-hydroxy-3-methylbut-2-enyl diphosphate site is built by histidine 42 and histidine 77. 2 residues coordinate dimethylallyl diphosphate: histidine 42 and histidine 77. Positions 42 and 77 each coordinate isopentenyl diphosphate. Cysteine 99 is a [4Fe-4S] cluster binding site. Position 127 (histidine 127) interacts with (2E)-4-hydroxy-3-methylbut-2-enyl diphosphate. Histidine 127 is a dimethylallyl diphosphate binding site. Histidine 127 lines the isopentenyl diphosphate pocket. Glutamate 129 (proton donor) is an active-site residue. A (2E)-4-hydroxy-3-methylbut-2-enyl diphosphate-binding site is contributed by threonine 165. Position 193 (cysteine 193) interacts with [4Fe-4S] cluster. Residues serine 221, serine 222, asparagine 223, and serine 265 each contribute to the (2E)-4-hydroxy-3-methylbut-2-enyl diphosphate site. Residues serine 221, serine 222, asparagine 223, and serine 265 each contribute to the dimethylallyl diphosphate site. Serine 221, serine 222, asparagine 223, and serine 265 together coordinate isopentenyl diphosphate.

The protein belongs to the IspH family. It depends on [4Fe-4S] cluster as a cofactor.

It carries out the reaction isopentenyl diphosphate + 2 oxidized [2Fe-2S]-[ferredoxin] + H2O = (2E)-4-hydroxy-3-methylbut-2-enyl diphosphate + 2 reduced [2Fe-2S]-[ferredoxin] + 2 H(+). The catalysed reaction is dimethylallyl diphosphate + 2 oxidized [2Fe-2S]-[ferredoxin] + H2O = (2E)-4-hydroxy-3-methylbut-2-enyl diphosphate + 2 reduced [2Fe-2S]-[ferredoxin] + 2 H(+). The protein operates within isoprenoid biosynthesis; dimethylallyl diphosphate biosynthesis; dimethylallyl diphosphate from (2E)-4-hydroxy-3-methylbutenyl diphosphate: step 1/1. It functions in the pathway isoprenoid biosynthesis; isopentenyl diphosphate biosynthesis via DXP pathway; isopentenyl diphosphate from 1-deoxy-D-xylulose 5-phosphate: step 6/6. Catalyzes the conversion of 1-hydroxy-2-methyl-2-(E)-butenyl 4-diphosphate (HMBPP) into a mixture of isopentenyl diphosphate (IPP) and dimethylallyl diphosphate (DMAPP). Acts in the terminal step of the DOXP/MEP pathway for isoprenoid precursor biosynthesis. This chain is 4-hydroxy-3-methylbut-2-enyl diphosphate reductase, found in Thermoanaerobacter pseudethanolicus (strain ATCC 33223 / 39E) (Clostridium thermohydrosulfuricum).